The chain runs to 3390 residues: Genome polyprotein (3390 aa).

Residues 1–15 (MNNQRKKTGKPSINM) form an interaction with host EXOC1 region. At 1–100 (MNNQRKKTGK…MLSIINKRKK (100 aa)) the chain is on the cytoplasmic side. The interval 37–72 (LLNGQGPMKLVMAFIAFLRFLAIPPTAGVLARWGTF) is hydrophobic; homodimerization of capsid protein C. The propeptide at 101-114 (TSLCLMMIMPAALA) is ER anchor for the capsid protein C, removed in mature form by serine protease NS3. The helical transmembrane segment at 101–120 (TSLCLMMIMPAALAFHLTSR) threads the bilayer. Over 121-243 (DGEPRMIVGK…VEKVETWALR (123 aa)) the chain is Extracellular. The N-linked (GlcNAc...) asparagine; by host glycan is linked to asparagine 183. A helical membrane pass occupies residues 244–264 (HPGFTILALFLAHYIGTSLTQ). Position 265 (lysine 265) is a topological domain, cytoplasmic. Residues 266-280 (VVIFILLMLVTPSMT) form a helical membrane-spanning segment. The Extracellular segment spans residues 281–723 (MRCVGVGNRD…VHQIFGSAYT (443 aa)). 4 cysteine pairs are disulfide-bonded: cysteine 283–cysteine 310, cysteine 340–cysteine 401, cysteine 354–cysteine 385, and cysteine 372–cysteine 396. Asparagine 347 carries an N-linked (GlcNAc...) asparagine; by host glycan. Residues 378–391 (DRGWGNGCGLFGKG) form a fusion peptide region. An N-linked (GlcNAc...) asparagine; by host glycan is attached at asparagine 433. 2 disulfides stabilise this stretch: cysteine 463–cysteine 563 and cysteine 580–cysteine 611. A helical membrane pass occupies residues 724–744 (ALFSGVSWVMKIGIGVLLTWI). Topologically, residues 745-750 (GLNSKN) are cytoplasmic. Residues 751–771 (TSMSFSCIAIGIITLYLGAVV) form a helical membrane-spanning segment. The Extracellular portion of the chain corresponds to 772–1193 (QADMGCVINW…MIGSNASDRM (422 aa)). Disulfide bonds link cysteine 777–cysteine 788, cysteine 828–cysteine 916, cysteine 952–cysteine 996, cysteine 1053–cysteine 1102, cysteine 1064–cysteine 1086, and cysteine 1085–cysteine 1089. 2 N-linked (GlcNAc...) asparagine; by host glycosylation sites follow: asparagine 903 and asparagine 980. 2 N-linked (GlcNAc...) asparagine; by host glycosylation sites follow: asparagine 1132 and asparagine 1188. Residues 1194–1218 (GMGVTYLALIATFKIQPFLALGFFL) traverse the membrane as a helical segment. Over 1219–1224 (RKLTSR) the chain is Cytoplasmic. The helical transmembrane segment at 1225-1243 (ENLLLGVGLAMATTLQLPE) threads the bilayer. Topologically, residues 1244–1267 (DIEQMANGIALGLMALKLITQFET) are lumenal. Residues 1268 to 1288 (YQLWTALISLTCSNTMFTLTV) traverse the membrane as a helical segment. Residue alanine 1289 is a topological domain, cytoplasmic. The chain crosses the membrane as a helical span at residues 1290 to 1308 (WRTATLILAGVSLLPVCQS). At 1309–1315 (SSMRKTD) the chain is on the lumenal side. Residues 1316 to 1336 (WLPMAVAAMGVPPLPLFIFSL) form a helical membrane-spanning segment. Topologically, residues 1337-1344 (KDTLKRRS) are cytoplasmic. The helical transmembrane segment at 1345 to 1365 (WPLNEGVMAVGLVSILASSLL) threads the bilayer. Residues 1366–1368 (RND) are Lumenal-facing. A helical transmembrane segment spans residues 1369–1389 (VPMAGPLVAGGLLIACYVITG). Residues 1390–1443 (TSADLTVEKAADITWEEEAEQTGVSHNLMITVDDDGTMRIKDDETENILTVLLK) are Cytoplasmic-facing. The interacts with and activates NS3 protease stretch occupies residues 1396 to 1435 (VEKAADITWEEEAEQTGVSHNLMITVDDDGTMRIKDDETE). An intramembrane region (helical) is located at residues 1444-1464 (TALLIVSGVFPYSIPATLLVW). Topologically, residues 1465-2146 (HTWQKQTQRS…VEELPETMET (682 aa)) are cytoplasmic. Positions 1474-1651 (SGVLWDVPSP…NAEPDGPTPE (178 aa)) constitute a Peptidase S7 domain. Residues histidine 1524, aspartate 1548, and serine 1608 each act as charge relay system; for serine protease NS3 activity in the active site. A Helicase ATP-binding domain is found at 1654-1810 (EEMFKKRNLT…QSNAPIQDEE (157 aa)). Residues 1658–1661 (KKRN) are important for RNA-binding. 1667–1674 (LHPGSGKT) contributes to the ATP binding site. The DEAH box motif lies at 1758 to 1761 (DEAH). The 167-residue stretch at 1820–1986 (SGNEWITDFA…GIIPALFEPE (167 aa)) folds into the Helicase C-terminal domain. At lysine 1862 the chain carries N6-acetyllysine; by host. The chain crosses the membrane as a helical span at residues 2147–2167 (LLLLGLMILLTGGAMLFLISG). Over 2168-2169 (KG) the chain is Lumenal. An intramembrane region (helical) is located at residues 2170–2190 (IGKTSIGLICVIASSGMLWMA). Residue glutamate 2191 is a topological domain, lumenal. A helical membrane pass occupies residues 2192–2212 (IPLQWIASAIVLEFFMMVLLI). The Cytoplasmic portion of the chain corresponds to 2213–2227 (PEPEKQRTPQDNQLA). A helical membrane pass occupies residues 2228-2248 (YVVIGILTLAAIIAANEMGLL). The Lumenal portion of the chain corresponds to 2249–2273 (ETTKRDLGMSKEPGVVSPTSYLDVD). Residues 2274-2294 (LHPASAWTLYAVATTVITPML) constitute an intramembrane region (helical). Topologically, residues 2295–2305 (RHTIENSTANV) are lumenal. Residues asparagine 2300 and asparagine 2304 are each glycosylated (N-linked (GlcNAc...) asparagine; by host). Positions 2306–2326 (SLAAIANQAVVLMGLDKGWPI) form an intramembrane region, helical. Residues 2327–2346 (SKMDLGVPLLALGCYSQVNP) lie on the Lumenal side of the membrane. A helical transmembrane segment spans residues 2347–2367 (LTLTAAVLLLITHYAIIGPGL). The Cytoplasmic portion of the chain corresponds to 2368–2412 (QAKATREAQKRTAAGIMKNPTVDGIMTIDLDPVIYDSKFEKQLGQ). Residues 2413–2433 (VMLLVLCAVQLLLMRTSWALC) traverse the membrane as a helical segment. Residues 2434-2458 (EALTLATGPITTLWEGSPGKFWNTT) are Lumenal-facing. A glycan (N-linked (GlcNAc...) asparagine; by host) is linked at asparagine 2456. Residues 2459–2479 (IAVSMANIFRGSYLAGAGLAF) form a helical membrane-spanning segment. Over 2480–3390 (SIMKSVGTGK…KEEESEGAIW (911 aa)) the chain is Cytoplasmic. The mRNA cap 0-1 NS5-type MT domain occupies 2492 to 2753 (TGSQGETLGE…DVDLGAGTRH (262 aa)). An S-adenosyl-L-methionine-binding site is contributed by serine 2546. Serine 2546 carries the post-translational modification Phosphoserine. Lysine 2551 functions as the For 2'-O-MTase activity in the catalytic mechanism. The SUMO-interacting motif signature appears at 2567-2570 (VIDL). Positions 2576, 2577, 2594, 2595, 2621, and 2622 each coordinate S-adenosyl-L-methionine. The active-site For 2'-O-MTase activity is the aspartate 2636. Position 2637 (isoleucine 2637) interacts with S-adenosyl-L-methionine. Active-site for 2'-O-MTase activity residues include lysine 2670 and glutamate 2706. Tyrosine 2708 is a binding site for S-adenosyl-L-methionine. Positions 2927, 2931, 2936, and 2939 each coordinate Zn(2+). The RdRp catalytic domain occupies 3018 to 3168 (AMYADDTAGW…PIDDRFANAL (151 aa)). Zn(2+) contacts are provided by histidine 3202, cysteine 3218, and cysteine 3337.

It in the N-terminal section; belongs to the class I-like SAM-binding methyltransferase superfamily. mRNA cap 0-1 NS5-type methyltransferase family. As to quaternary structure, homodimer. Interacts (via N-terminus) with host EXOC1 (via C-terminus); this interaction results in EXOC1 degradation through the proteasome degradation pathway. Forms heterodimers with envelope protein E in the endoplasmic reticulum and Golgi. In terms of assembly, homodimer; in the endoplasmic reticulum and Golgi. Interacts with protein prM. Interacts with non-structural protein 1. As to quaternary structure, homodimer; Homohexamer when secreted. Interacts with envelope protein E. Interacts (via N-terminus) with serine protease NS3. In terms of assembly, forms a heterodimer with serine protease NS3. May form homooligomers. As to quaternary structure, forms a heterodimer with NS2B. Interacts with NS4B. Interacts with unphosphorylated RNA-directed RNA polymerase NS5; this interaction stimulates RNA-directed RNA polymerase NS5 guanylyltransferase activity. Interacts with host MAVS; this interaction inhibits the synthesis of IFN-beta. Interacts with host AUP1; the interaction occurs in the presence of Dengue virus NS4B and induces lipophagy which facilitates production of virus progeny particles. In terms of assembly, interacts with serine protease NS3. As to quaternary structure, homodimer. Interacts with host STAT2; this interaction inhibits the phosphorylation of the latter, and, when all viral proteins are present (polyprotein), targets STAT2 for degradation. Interacts with serine protease NS3. Specific enzymatic cleavages in vivo yield mature proteins. Cleavages in the lumen of endoplasmic reticulum are performed by host signal peptidase, whereas cleavages in the cytoplasmic side are performed by serine protease NS3. Signal cleavage at the 2K-4B site requires a prior NS3 protease-mediated cleavage at the 4A-2K site. In terms of processing, cleaved in post-Golgi vesicles by a host furin, releasing the mature small envelope protein M, and peptide pr. This cleavage is incomplete as up to 30% of viral particles still carry uncleaved prM. Post-translationally, N-glycosylated. N-glycosylated. The excreted form is glycosylated and this is required for efficient secretion of the protein from infected cells. In terms of processing, acetylated by host KAT5. Acetylation modulates NS3 RNA-binding and unwinding activities and plays an important positive role for viral replication. Post-translationally, sumoylation of RNA-directed RNA polymerase NS5 increases NS5 protein stability allowing proper viral RNA replication. Phosphorylated on serines residues. This phosphorylation may trigger NS5 nuclear localization.

It is found in the virion. Its subcellular location is the host nucleus. The protein resides in the host cytoplasm. It localises to the host perinuclear region. The protein localises to the secreted. It is found in the virion membrane. Its subcellular location is the host endoplasmic reticulum membrane. The protein resides in the host mitochondrion. It catalyses the reaction Selective hydrolysis of -Xaa-Xaa-|-Yaa- bonds in which each of the Xaa can be either Arg or Lys and Yaa can be either Ser or Ala.. The catalysed reaction is RNA(n) + a ribonucleoside 5'-triphosphate = RNA(n+1) + diphosphate. The enzyme catalyses a ribonucleoside 5'-triphosphate + H2O = a ribonucleoside 5'-diphosphate + phosphate + H(+). It carries out the reaction ATP + H2O = ADP + phosphate + H(+). It catalyses the reaction a 5'-end (5'-triphosphoguanosine)-ribonucleoside in mRNA + S-adenosyl-L-methionine = a 5'-end (N(7)-methyl 5'-triphosphoguanosine)-ribonucleoside in mRNA + S-adenosyl-L-homocysteine. The catalysed reaction is a 5'-end (N(7)-methyl 5'-triphosphoguanosine)-ribonucleoside in mRNA + S-adenosyl-L-methionine = a 5'-end (N(7)-methyl 5'-triphosphoguanosine)-(2'-O-methyl-ribonucleoside) in mRNA + S-adenosyl-L-homocysteine + H(+). Functionally, plays a role in virus budding by binding to the cell membrane and gathering the viral RNA into a nucleocapsid that forms the core of a mature virus particle. During virus entry, may induce genome penetration into the host cytoplasm after hemifusion induced by the surface proteins. Can migrate to the cell nucleus where it modulates host functions. Overcomes the anti-viral effects of host EXOC1 by sequestering and degrading the latter through the proteasome degradation pathway. Its function is as follows. Inhibits RNA silencing by interfering with host Dicer. Prevents premature fusion activity of envelope proteins in trans-Golgi by binding to envelope protein E at pH6.0. After virion release in extracellular space, gets dissociated from E dimers. In terms of biological role, acts as a chaperone for envelope protein E during intracellular virion assembly by masking and inactivating envelope protein E fusion peptide. prM is the only viral peptide matured by host furin in the trans-Golgi network probably to avoid catastrophic activation of the viral fusion activity in acidic Golgi compartment prior to virion release. prM-E cleavage is inefficient, and many virions are only partially matured. These uncleaved prM would play a role in immune evasion. Functionally, may play a role in virus budding. Exerts cytotoxic effects by activating a mitochondrial apoptotic pathway through M ectodomain. May display a viroporin activity. Its function is as follows. Binds to host cell surface receptor and mediates fusion between viral and cellular membranes. Envelope protein is synthesized in the endoplasmic reticulum in the form of heterodimer with protein prM. They play a role in virion budding in the ER, and the newly formed immature particle is covered with 60 spikes composed of heterodimer between precursor prM and envelope protein E. The virion is transported to the Golgi apparatus where the low pH causes dissociation of PrM-E heterodimers and formation of E homodimers. prM-E cleavage is inefficient, and many virions are only partially matured. These uncleaved prM would play a role in immune evasion. Involved in immune evasion, pathogenesis and viral replication. Once cleaved off the polyprotein, is targeted to three destinations: the viral replication cycle, the plasma membrane and the extracellular compartment. Essential for viral replication. Required for formation of the replication complex and recruitment of other non-structural proteins to the ER-derived membrane structures. Excreted as a hexameric lipoparticle that plays a role against host immune response. Antagonizing the complement function. Binds to the host macrophages and dendritic cells. Inhibits signal transduction originating from Toll-like receptor 3 (TLR3). In terms of biological role, disrupts the host endothelial glycocalyx layer of host pulmonary microvascular endothelial cells, inducing degradation of sialic acid and shedding of heparan sulfate proteoglycans. NS1 induces expression of sialidases, heparanase, and activates cathepsin L, which activates heparanase via enzymatic cleavage. These effects are probably linked to the endothelial hyperpermeability observed in severe dengue disease. Functionally, component of the viral RNA replication complex that functions in virion assembly and antagonizes the host immune response. Its function is as follows. Required cofactor for the serine protease function of NS3. May have membrane-destabilizing activity and form viroporins. Displays three enzymatic activities: serine protease, NTPase and RNA helicase. NS3 serine protease, in association with NS2B, performs its autocleavage and cleaves the polyprotein at dibasic sites in the cytoplasm: C-prM, NS2A-NS2B, NS2B-NS3, NS3-NS4A, NS4A-2K and NS4B-NS5. NS3 RNA helicase binds RNA and unwinds dsRNA in the 3' to 5' direction. In terms of biological role, regulates the ATPase activity of the NS3 helicase activity. NS4A allows NS3 helicase to conserve energy during unwinding. Plays a role in the inhibition of the host innate immune response. Interacts with host MAVS and thereby prevents the interaction between RIGI and MAVS. In turn, IFN-beta production is impaired. Interacts with host AUP1 which mediates induction of lipophagy in host cells and facilitates production of virus progeny particles. Functionally, functions as a signal peptide for NS4B and is required for the interferon antagonism activity of the latter. Its function is as follows. Induces the formation of ER-derived membrane vesicles where the viral replication takes place. Inhibits interferon (IFN)-induced host STAT1 phosphorylation and nuclear translocation, thereby preventing the establishment of cellular antiviral state by blocking the IFN-alpha/beta pathway. Replicates the viral (+) and (-) RNA genome, and performs the capping of genomes in the cytoplasm. NS5 methylates viral RNA cap at guanine N-7 and ribose 2'-O positions. Besides its role in RNA genome replication, also prevents the establishment of cellular antiviral state by blocking the interferon-alpha/beta (IFN-alpha/beta) signaling pathway. Inhibits host TYK2 and STAT2 phosphorylation, thereby preventing activation of JAK-STAT signaling pathway. The polypeptide is Genome polyprotein (pol) (Dengue virus type 3 (strain Martinique/1243/1999) (DENV-3)).